A 285-amino-acid polypeptide reads, in one-letter code: Polyamine aminopropyltransferase (285 aa).

The PABS domain occupies 5–241; it reads DNWYIEHFQP…GWWSVTMASK (237 aa). Gln35 is a binding site for S-methyl-5'-thioadenosine. Positions 66 and 90 each coordinate spermidine. S-methyl-5'-thioadenosine is bound by residues Asp110 and 141–142; that span reads DG. Asp160 (proton acceptor) is an active-site residue. 160-163 is a spermidine binding site; it reads DSTD. Pro167 provides a ligand contact to S-methyl-5'-thioadenosine.

This sequence belongs to the spermidine/spermine synthase family. Homodimer or homotetramer.

The protein resides in the cytoplasm. The enzyme catalyses S-adenosyl 3-(methylsulfanyl)propylamine + putrescine = S-methyl-5'-thioadenosine + spermidine + H(+). It functions in the pathway amine and polyamine biosynthesis; spermidine biosynthesis; spermidine from putrescine: step 1/1. Catalyzes the irreversible transfer of a propylamine group from the amino donor S-adenosylmethioninamine (decarboxy-AdoMet) to putrescine (1,4-diaminobutane) to yield spermidine. This is Polyamine aminopropyltransferase from Xanthomonas campestris pv. campestris (strain 8004).